The following is a 994-amino-acid chain: Leucine-rich repeat receptor-like kinase protein FLORAL ORGAN NUMBER1 (994 aa).

The first 17 residues, 1–17 (MPPTLLLLLLLLPPSLA), serve as a signal peptide directing secretion. LRR repeat units lie at residues 73-93 (AINL…IALL), 94-117 (DSLA…LPTL), 118-141 (PSLR…DSGG), 147-171 (FPSL…SASH), 172-194 (ARLR…SYGD), 195-219 (LAAL…LSRL), 244-268 (LGAL…LGRL), 269-292 (QRLD…LGDL), 293-316 (SSLA…LANL), 318-340 (NLKL…VAGF), 341-364 (AQLE…LGKN), 365-388 (GRLK…LCAG), 390-412 (RLEM…LGDC), 413-436 (KTLT…LFNL), 438-459 (QANM…VIGG), 460-483 (DKIG…IGNL), 484-507 (PALQ…IGNL), 509-531 (NLSR…LIRC), 533-555 (SLAA…ITSL), 556-579 (KILC…MSNM), and 581-604 (SLTT…QFLV). N-linked (GlcNAc...) asparagine glycosylation is found at Asn75, Asn98, Asn124, Asn129, and Asn159. A glycan (N-linked (GlcNAc...) asparagine) is linked at Asn256. Residue Asn315 is glycosylated (N-linked (GlcNAc...) asparagine). A glycan (N-linked (GlcNAc...) asparagine) is linked at Asn352. N-linked (GlcNAc...) asparagine glycans are attached at residues Asn495, Asn509, and Asn514. N-linked (GlcNAc...) asparagine glycans are attached at residues Asn562 and Asn578. The N-linked (GlcNAc...) asparagine glycan is linked to Asn606. The helical transmembrane segment at 647 to 667 (KKMLVALVAAFAAVAVAFLGA) threads the bilayer. The region spanning 704 to 978 (VKEDNIIGKG…TMREVVHMLS (275 aa)) is the Protein kinase domain. ATP is bound by residues 710–718 (IGKGGAGIV) and Lys731. The active-site Proton acceptor is Asp828.

The protein belongs to the protein kinase superfamily. Ser/Thr protein kinase family. Expressed in shoot apical meristem, and after transition to the reproductive phase, detected in the inflorescence and the floral meristems. Expressed uniformly throughout the meristems. Expressed also in floral organ primordia, such as the palea, lemma, lodicules, stamens, carpels and ovules.

It localises to the membrane. It catalyses the reaction L-seryl-[protein] + ATP = O-phospho-L-seryl-[protein] + ADP + H(+). The catalysed reaction is L-threonyl-[protein] + ATP = O-phospho-L-threonyl-[protein] + ADP + H(+). In terms of biological role, receptor-like kinase protein that regulates the size of the floral meristem. In Oryza sativa subsp. japonica (Rice), this protein is Leucine-rich repeat receptor-like kinase protein FLORAL ORGAN NUMBER1 (FON1).